A 274-amino-acid polypeptide reads, in one-letter code: TIP41-like protein (274 aa).

It belongs to the TIP41 family.

This chain is TIP41-like protein (tiprl), found in Dictyostelium discoideum (Social amoeba).